Reading from the N-terminus, the 564-residue chain is Proline--tRNA ligase (564 aa).

It belongs to the class-II aminoacyl-tRNA synthetase family. ProS type 1 subfamily. As to quaternary structure, homodimer.

Its subcellular location is the cytoplasm. It carries out the reaction tRNA(Pro) + L-proline + ATP = L-prolyl-tRNA(Pro) + AMP + diphosphate. Functionally, catalyzes the attachment of proline to tRNA(Pro) in a two-step reaction: proline is first activated by ATP to form Pro-AMP and then transferred to the acceptor end of tRNA(Pro). As ProRS can inadvertently accommodate and process non-cognate amino acids such as alanine and cysteine, to avoid such errors it has two additional distinct editing activities against alanine. One activity is designated as 'pretransfer' editing and involves the tRNA(Pro)-independent hydrolysis of activated Ala-AMP. The other activity is designated 'posttransfer' editing and involves deacylation of mischarged Ala-tRNA(Pro). The misacylated Cys-tRNA(Pro) is not edited by ProRS. In Xanthomonas oryzae pv. oryzae (strain KACC10331 / KXO85), this protein is Proline--tRNA ligase.